Consider the following 2326-residue polypeptide: Nonribosomal peptide synthetase inpB (2326 aa).

A Carrier 1 domain is found at 8–84 (SPSEWLQLEL…SLYSMAQGPA (77 aa)). The residue at position 45 (Ser45) is an O-(pantetheine 4'-phosphoryl)serine. The segment at 87-121 (ASSSTSDNASDKDSSLDDSETGALTPTTDAGSSLA) is disordered. Over residues 108-121 (GALTPTTDAGSSLA) the composition is skewed to polar residues. Positions 144–568 (QAVVPCSAIQ…LLSPGEVSQL (425 aa)) are condensation 1. The interval 593–997 (LQPGAAAVNS…GRRDTQVKIR (405 aa)) is adenylation 1. The region spanning 1145–1221 (EPSTETEFKL…DLARAVESRV (77 aa)) is the Carrier 2 domain. Ser1182 bears the O-(pantetheine 4'-phosphoryl)serine mark. The segment at 1226-1247 (DEEDPAPFSVWRESRGSEPSEE) is disordered. Residues 1266 to 1680 (EDVLPCTALQ…LLSPEDVNQL (415 aa)) form a condensation 2 region. Positions 1702 to 2097 (EVARSRPGAA…GRIDTQIKIR (396 aa)) are adenylation 2. Residues 2216–2294 (PPSTEMEKAL…DLAVLLEKRP (79 aa)) form the Carrier 3 domain. An O-(pantetheine 4'-phosphoryl)serine modification is found at Ser2253.

The protein belongs to the NRP synthetase family.

Its pathway is secondary metabolite biosynthesis. Its function is as follows. Nonribosomal peptide synthetase; part of the inp gene cluster that mediates the biosynthesis of fellutamide B, a mycotoxin that acts as a proteasome inhibitor. In the first step of fellutabmide B biosynthesis inpC activates 3-hydroxydodecanoic acid to generate 3-hydroxydodecanoyl-AMP that is then loaded onto the T0 domain of inpB. The 3-hydroxydodecanoyl-S-phosphopantetheinyl-T0 is sequentially extended with L-Asn and L-Gln by the two CAT modules of inpB. The linear lipodipeptide from inpB is then transferred onto inpA for the addition of the third amino acid, L-Leu. Reductive releasing of the lipotripeptide by the TE domain of inpA produces (2S)-fellutamide B. InpF might be involved in the release and transfer of the lipodipeptide from inpB to inpA. The inp cluster-encoded proteasome subunit inpE confers resistance to internally produced fellutamides. The MFS efflux transporter inpD may contribute to fellutamide resistance as well. The polypeptide is Nonribosomal peptide synthetase inpB (Emericella nidulans (strain FGSC A4 / ATCC 38163 / CBS 112.46 / NRRL 194 / M139) (Aspergillus nidulans)).